A 460-amino-acid chain; its full sequence is Cation efflux system protein CusC (460 aa).

The N-terminal stretch at 1–17 (MSPCKLLPFCVALALTG) is a signal peptide. A lipid anchor (N-palmitoyl cysteine) is attached at Cys-18. A lipid anchor (S-diacylglycerol cysteine) is attached at Cys-18.

The protein belongs to the outer membrane factor (OMF) (TC 1.B.17) family. Homotrimer. Component of the cus efflux system composed of CusA, CusB, CusC and CusF.

The protein localises to the cell outer membrane. In terms of biological role, forms pores that allow passive diffusion of cations across the outer membrane. Part of a cation efflux system that mediates resistance to copper and silver. The protein is Cation efflux system protein CusC (cusC) of Escherichia coli O6:H1 (strain CFT073 / ATCC 700928 / UPEC).